The primary structure comprises 286 residues: 3-amino-tetrahydro-pyrrolizinone reductase (286 aa).

Tyr146 (proton acceptor) is an active-site residue.

Belongs to the short-chain dehydrogenases/reductases (SDR) family.

It carries out the reaction 3-amino-5,6,7,7a-tetrahydro-1H-pyrrolizin-1-one + AH2 = 3-amino-tetrahydro-1H-pyrrolizin-1-ol + A. Involved in the biosynthetic pathway of pyrrolizwilline, a pyrrolizidine alkaloid. Catalyzes the reduction of 3-amino-tetrahydro-pyrrolizinone to 3-amino-tetrahydro-pyrrolizinol. This is 3-amino-tetrahydro-pyrrolizinone reductase (xhpD) from Xenorhabdus hominickii.